Here is a 306-residue protein sequence, read N- to C-terminus: Curved DNA-binding protein (306 aa).

Residues 5 to 69 enclose the J domain; sequence DYYAIMGVKP…QRRAEYDQMW (65 aa).

The protein resides in the cytoplasm. It is found in the nucleoid. Its function is as follows. DNA-binding protein that preferentially recognizes a curved DNA sequence. It is probably a functional analog of DnaJ; displays overlapping activities with DnaJ, but functions under different conditions, probably acting as a molecular chaperone in an adaptive response to environmental stresses other than heat shock. Lacks autonomous chaperone activity; binds native substrates and targets them for recognition by DnaK. Its activity is inhibited by the binding of CbpM. In Escherichia coli O7:K1 (strain IAI39 / ExPEC), this protein is Curved DNA-binding protein.